A 240-amino-acid chain; its full sequence is Urease accessory protein UreF (240 aa).

Belongs to the UreF family. In terms of assembly, ureD, UreF and UreG form a complex that acts as a GTP-hydrolysis-dependent molecular chaperone, activating the urease apoprotein by helping to assemble the nickel containing metallocenter of UreC. The UreE protein probably delivers the nickel.

It localises to the cytoplasm. Its function is as follows. Required for maturation of urease via the functional incorporation of the urease nickel metallocenter. The polypeptide is Urease accessory protein UreF (Bradyrhizobium sp. (strain ORS 278)).